The chain runs to 607 residues: All-trans-retinol 13,14-reductase (607 aa).

Positions 1 to 22 (MWFAVVAIFLALVAFLYRYVVG) are cleaved as a signal peptide.

This sequence belongs to the carotenoid/retinoid oxidoreductase family. CrtISO subfamily. It depends on NAD(+) as a cofactor. Requires NADP(+) as cofactor. FAD is required as a cofactor.

It is found in the endoplasmic reticulum membrane. It carries out the reaction all-trans-13,14-dihydroretinol + A = all-trans-retinol + AH2. Catalyzes the saturation of all-trans-retinol to all-trans-13,14-dihydroretinol. In addition, saturates the 7-8 double bond of all-trans-retinol to produce all-trans-7,8-dihydroretinol. Can also use vitamin A2 (all-trans-3,4-didehydroretinol) as a substrate, to produce all-trans-13,14-dihydro-3,4-didehydroretinol or all-trans-7,8-dihydro-3,4-didehydroretinol. May play a role in vitamin A metabolism. The chain is All-trans-retinol 13,14-reductase from Danio rerio (Zebrafish).